Reading from the N-terminus, the 387-residue chain is uncharacterized protein (387 aa).

Its subcellular location is the virion. This is an uncharacterized protein from Acanthamoeba polyphaga (Amoeba).